Here is a 798-residue protein sequence, read N- to C-terminus: Phenylalanine--tRNA ligase beta subunit (798 aa).

Positions 38–148 constitute a tRNA-binding domain; it reads IGNYEKVVVG…PEAPVGEKIE (111 aa). Residues 400–475 form the B5 domain; it reads FTPKVIAVSL…RYLGYNNFPD (76 aa). The Mg(2+) site is built by D453, D459, E462, and E463. Residues 703–796 enclose the FDX-ACB domain; the sequence is SPYPEVKRDI…LEAKTGAKLR (94 aa).

This sequence belongs to the phenylalanyl-tRNA synthetase beta subunit family. Type 1 subfamily. As to quaternary structure, tetramer of two alpha and two beta subunits. The cofactor is Mg(2+).

The protein localises to the cytoplasm. The catalysed reaction is tRNA(Phe) + L-phenylalanine + ATP = L-phenylalanyl-tRNA(Phe) + AMP + diphosphate + H(+). This is Phenylalanine--tRNA ligase beta subunit from Carboxydothermus hydrogenoformans (strain ATCC BAA-161 / DSM 6008 / Z-2901).